The chain runs to 54 residues: Large ribosomal subunit protein bL33B (54 aa).

Belongs to the bacterial ribosomal protein bL33 family.

The protein is Large ribosomal subunit protein bL33B of Saccharopolyspora erythraea (strain ATCC 11635 / DSM 40517 / JCM 4748 / NBRC 13426 / NCIMB 8594 / NRRL 2338).